The sequence spans 199 residues: Translation initiation factor IF-3 (199 aa).

Belongs to the IF-3 family. In terms of assembly, monomer.

The protein resides in the cytoplasm. Its function is as follows. IF-3 binds to the 30S ribosomal subunit and shifts the equilibrium between 70S ribosomes and their 50S and 30S subunits in favor of the free subunits, thus enhancing the availability of 30S subunits on which protein synthesis initiation begins. The protein is Translation initiation factor IF-3 of Gloeobacter violaceus (strain ATCC 29082 / PCC 7421).